We begin with the raw amino-acid sequence, 148 residues long: 3-dehydroquinate dehydratase (148 aa).

Tyr-24 (proton acceptor) is an active-site residue. Residues Asn-80, His-86, and Asp-93 each contribute to the substrate site. The active-site Proton donor is the His-106. Substrate contacts are provided by residues 107-108 and Arg-117; that span reads IS.

This sequence belongs to the type-II 3-dehydroquinase family. As to quaternary structure, homododecamer.

The enzyme catalyses 3-dehydroquinate = 3-dehydroshikimate + H2O. Its pathway is metabolic intermediate biosynthesis; chorismate biosynthesis; chorismate from D-erythrose 4-phosphate and phosphoenolpyruvate: step 3/7. Catalyzes a trans-dehydration via an enolate intermediate. This is 3-dehydroquinate dehydratase from Acidovorax sp. (strain JS42).